A 347-amino-acid polypeptide reads, in one-letter code: D-alanine--D-alanine ligase (347 aa).

An ATP-grasp domain is found at 138-339 (KILCSHAGIP…YSQVIETILA (202 aa)). 171 to 226 (SDRFTFPLFVKPVDAGSSFGCTFVDFFEQLPVAIEHALQHGKSAIVEPALDAPEVF) is a binding site for ATP. D296, E308, and N310 together coordinate Mg(2+).

The protein belongs to the D-alanine--D-alanine ligase family. Mg(2+) is required as a cofactor. The cofactor is Mn(2+).

It localises to the cytoplasm. It catalyses the reaction 2 D-alanine + ATP = D-alanyl-D-alanine + ADP + phosphate + H(+). It participates in cell wall biogenesis; peptidoglycan biosynthesis. Functionally, cell wall formation. In Tropheryma whipplei (strain TW08/27) (Whipple's bacillus), this protein is D-alanine--D-alanine ligase.